We begin with the raw amino-acid sequence, 43 residues long: Neurotrophin-3 (43 aa).

This sequence belongs to the NGF-beta family.

The protein localises to the secreted. Seems to promote the survival of visceral and proprioceptive sensory neurons. This is Neurotrophin-3 (ntf3) from Raja clavata (Thornback ray).